Here is a 959-residue protein sequence, read N- to C-terminus: DNA-directed RNA polymerase subunit beta'' (959 aa).

Zn(2+)-binding residues include Cys211, Cys288, Cys295, and Cys298.

It belongs to the RNA polymerase beta' chain family. RpoC2 subfamily. As to quaternary structure, in plastids the minimal PEP RNA polymerase catalytic core is composed of four subunits: alpha, beta, beta', and beta''. When a (nuclear-encoded) sigma factor is associated with the core the holoenzyme is formed, which can initiate transcription. Requires Zn(2+) as cofactor.

The protein resides in the plastid. It is found in the apicoplast. It catalyses the reaction RNA(n) + a ribonucleoside 5'-triphosphate = RNA(n+1) + diphosphate. DNA-dependent RNA polymerase catalyzes the transcription of DNA into RNA using the four ribonucleoside triphosphates as substrates. In Plasmodium falciparum (isolate 3D7), this protein is DNA-directed RNA polymerase subunit beta''.